Reading from the N-terminus, the 434-residue chain is MSIITDVYAREVLDSRGNPTLEVEVYTESGAFGRGMVPSGASTGEHEAVELRDGDKSRYGGLGTQKAVDNVNNVIAEAIIGYDVRDQQAIDRAMIALDGTPNKGKLGANAILGVSIAVARAAADYLEIPLYSYLGGFNTKVLPTPMMNIINGGSHSDAPIAFQEFMILPVGAPTFKEALRYGAEIFHALKKILKSRGLETAVGDEGGFAPRFEGTEDGVETIIAAIEAAGYVPGKDVFIGFDCASSEFYDKERKVYDYTKFEGEGAAVRTAAEQIDYLEELVNKYPIITIEDGMDENDWDGWKALTERLGKKVQLVGDDFFVTNTDYLSRGIKEGCANSILIKVNQIGTLTETFDAIEMAKEAGYTAVVSHRSGETEDSTIADIAVATNAGQIKTGSLSRTDRIAKYNQLLRIEDQLGEVAQYKGLQAFYNLKK.

Glutamine 163 serves as a coordination point for (2R)-2-phosphoglycerate. The active-site Proton donor is the glutamate 205. Mg(2+) is bound by residues aspartate 242, glutamate 291, and aspartate 318. (2R)-2-phosphoglycerate-binding residues include lysine 343, arginine 372, serine 373, and lysine 394. The Proton acceptor role is filled by lysine 343.

This sequence belongs to the enolase family. It depends on Mg(2+) as a cofactor.

The protein resides in the cytoplasm. The protein localises to the secreted. It is found in the cell surface. The catalysed reaction is (2R)-2-phosphoglycerate = phosphoenolpyruvate + H2O. Its pathway is carbohydrate degradation; glycolysis; pyruvate from D-glyceraldehyde 3-phosphate: step 4/5. Functionally, catalyzes the reversible conversion of 2-phosphoglycerate (2-PG) into phosphoenolpyruvate (PEP). It is essential for the degradation of carbohydrates via glycolysis. The chain is Enolase from Streptococcus gordonii (strain Challis / ATCC 35105 / BCRC 15272 / CH1 / DL1 / V288).